Consider the following 316-residue polypeptide: Olfactory receptor 5AP2 (316 aa).

Topologically, residues 1–34 (MRLMKEVRGRNQTEVTEFLLLGLSDNPDLQGVLF) are extracellular. An N-linked (GlcNAc...) asparagine glycan is attached at asparagine 11. The helical transmembrane segment at 35 to 55 (ALFLLIYMANMVGNLGMIVLI) threads the bilayer. A topological domain (cytoplasmic) is located at residue lysine 56. The chain crosses the membrane as a helical span at residues 57–77 (IDLCLHTPMYFFLSSLSFVDA). At 78–104 (SYSSSVTPKMLVNLMAENKAISFHGCA) the chain is on the extracellular side. The cysteines at positions 103 and 195 are disulfide-linked. The helical transmembrane segment at 105 to 125 (AQFYFFGSFLGTECFLLAMMA) threads the bilayer. Residues 126 to 135 (YDRYAAIWNP) are Cytoplasmic-facing. A helical transmembrane segment spans residues 136-156 (LLYPVLVSGRICFLLIATSFL). Over 157–210 (AGCGNAAIHTGMTFRLSFCGSNRINHFYCDTPPLLKLSCSDTHFNGIVIMAFSS) the chain is Extracellular. A helical transmembrane segment spans residues 211-231 (FIVISCVMIVLISYLCIFIAV). Over 232–245 (LKMPSLEGRHKAFS) the chain is Cytoplasmic. Residues 246–266 (TCASYLMAVTIFFGTILFMYL) traverse the membrane as a helical segment. The Extracellular portion of the chain corresponds to 267 to 278 (RPTSSYSMEQDK). The helical transmembrane segment at 279 to 299 (VVSVFYTVIIPVLNPLIYSLK) threads the bilayer. Residues 300–316 (NKDVKKALKKILWKHIL) are Cytoplasmic-facing.

The protein belongs to the G-protein coupled receptor 1 family.

Its subcellular location is the cell membrane. In terms of biological role, odorant receptor. The chain is Olfactory receptor 5AP2 from Homo sapiens (Human).